The following is a 98-amino-acid chain: MPVVYVNIFLAFIVSLVGLLIYRSHLMSSLLCLEGMMLSLFVMLTVTVLNNHFTLANMAPIILLVFAACEAALGLSLLVMVSNTYGTDYVQNLNLLQC.

The next 3 helical transmembrane spans lie at 1-21 (MPVVYVNIFLAFIVSLVGLLI), 29-49 (SLLCLEGMMLSLFVMLTVTVL), and 61-81 (IILLVFAACEAALGLSLLVMV).

It belongs to the complex I subunit 4L family. Core subunit of respiratory chain NADH dehydrogenase (Complex I) which is composed of 45 different subunits.

It is found in the mitochondrion inner membrane. It carries out the reaction a ubiquinone + NADH + 5 H(+)(in) = a ubiquinol + NAD(+) + 4 H(+)(out). Core subunit of the mitochondrial membrane respiratory chain NADH dehydrogenase (Complex I) which catalyzes electron transfer from NADH through the respiratory chain, using ubiquinone as an electron acceptor. Part of the enzyme membrane arm which is embedded in the lipid bilayer and involved in proton translocation. This is NADH-ubiquinone oxidoreductase chain 4L (MT-ND4L) from Ursus maritimus (Polar bear).